An 89-amino-acid polypeptide reads, in one-letter code: Small ribosomal subunit protein uS15 (89 aa).

Belongs to the universal ribosomal protein uS15 family. As to quaternary structure, part of the 30S ribosomal subunit. Forms a bridge to the 50S subunit in the 70S ribosome, contacting the 23S rRNA.

Functionally, one of the primary rRNA binding proteins, it binds directly to 16S rRNA where it helps nucleate assembly of the platform of the 30S subunit by binding and bridging several RNA helices of the 16S rRNA. Its function is as follows. Forms an intersubunit bridge (bridge B4) with the 23S rRNA of the 50S subunit in the ribosome. This chain is Small ribosomal subunit protein uS15, found in Marinomonas sp. (strain MWYL1).